A 67-amino-acid polypeptide reads, in one-letter code: uncharacterized protein (67 aa).

This is an uncharacterized protein from Haloarcula hispanica (His1V).